We begin with the raw amino-acid sequence, 133 residues long: Small ribosomal subunit protein eS17 (133 aa).

It belongs to the eukaryotic ribosomal protein eS17 family.

The chain is Small ribosomal subunit protein eS17 (RpS17) from Spodoptera frugiperda (Fall armyworm).